Here is a 251-residue protein sequence, read N- to C-terminus: NLP effector protein Pc129485 (251 aa).

The first 19 residues, 1-19, serve as a signal peptide directing secretion; sequence MNFRIVLLVLVASLAGAQA. Positions 127–133 match the Hepta-peptide GHRHDWE motif motif; sequence GHRHNWE. N-linked (GlcNAc...) asparagine glycans are attached at residues Asn-146 and Asn-218.

Belongs to the Necrosis inducing protein (NPP1) family.

Its subcellular location is the secreted. Its function is as follows. Secreted effector that contributes strongly to virulence during infection by P.capsici. The protein is NLP effector protein Pc129485 of Phytophthora capsici.